Here is a 37-residue protein sequence, read N- to C-terminus: Large ribosomal subunit protein bL36c (37 aa).

This sequence belongs to the bacterial ribosomal protein bL36 family.

Its subcellular location is the plastid. The protein resides in the chloroplast. The protein is Large ribosomal subunit protein bL36c of Tetradesmus obliquus (Green alga).